The chain runs to 358 residues: DnaJ homolog subfamily B member 11 (358 aa).

An N-terminal signal peptide occupies residues 1–22 (MAPQNLSTFCLLLLYLIGAVIA). A J domain is found at 25 to 90 (DFYKILGVPR…EKRKQYDTYG (66 aa)). The residue at position 188 (Thr188) is a Phosphothreonine. The N-linked (GlcNAc...) asparagine glycan is linked to Asn261.

Part of a large chaperone multiprotein complex comprising DNAJB11, HSP90B1, HSPA5, HYOU, PDIA2, PDIA4, PDIA6, PPIB, SDF2L1, UGGT1 and very small amounts of ERP29, but not, or at very low levels, CALR nor CANX. Binds to denatured substrates in an ATP-independent manner. Interacts via the J domain with HSPA5 in an ATP-dependent manner. In terms of processing, contains high-mannose Endo H-sensitive carbohydrates. Cys-169, Cys-171, Cys-193 and Cys-196 form intramolecular disulfide bonds. The preferential partner for each Cys is not known.

The protein resides in the endoplasmic reticulum lumen. Its function is as follows. As a co-chaperone for HSPA5 it is required for proper folding, trafficking or degradation of proteins. Binds directly to both unfolded proteins that are substrates for ERAD and nascent unfolded peptide chains, but dissociates from the HSPA5-unfolded protein complex before folding is completed. May help recruiting HSPA5 and other chaperones to the substrate. Stimulates HSPA5 ATPase activity. It is necessary for maturation and correct trafficking of PKD1. The protein is DnaJ homolog subfamily B member 11 (Dnajb11) of Rattus norvegicus (Rat).